An 88-amino-acid chain; its full sequence is Large ribosomal subunit protein bL27 (88 aa).

The tract at residues 1–21 is disordered; sequence MAHKKAGGSSRNGRDSDGRRL.

The protein belongs to the bacterial ribosomal protein bL27 family.

This is Large ribosomal subunit protein bL27 from Methylobacterium nodulans (strain LMG 21967 / CNCM I-2342 / ORS 2060).